A 461-amino-acid polypeptide reads, in one-letter code: Nuclear distribution protein PAC1 (461 aa).

The LisH domain occupies 9–41 (QAEELHKSIIAYLTANNLLDTANTLRAELNLNE). Positions 61 to 88 (TSVVRLQKKIMDLESRMSAMQAELDNAT) form a coiled coil. WD repeat units lie at residues 114–155 (SHRD…RTIK), 157–197 (HTRA…KNIR), 201–248 (GHDH…CLRT), 251–290 (GHTA…PETK), 312–355 (QYLS…LLTL), 357–396 (GHDN…KCIK), 401–446 (AHER…IRCV), and 448–461 (ATGG…IFAN).

The protein belongs to the WD repeat LIS1/nudF family. In terms of assembly, self-associates. Interacts with NDL1 and dynein.

Its subcellular location is the cytoplasm. The protein localises to the cytoskeleton. The protein resides in the spindle pole. Its function is as follows. Positively regulates the activity of the minus-end directed microtubule motor protein dynein. May enhance dynein-mediated microtubule sliding by targeting dynein to the microtubule plus end. Required for nuclear migration during vegetative growth as well as development. Required for retrograde early endosome (EE) transport from the hyphal tip. Required for localization of dynein to the mitotic spindle poles. Recruits additional proteins to the dynein complex at SPBs. In Arthroderma benhamiae (strain ATCC MYA-4681 / CBS 112371) (Trichophyton mentagrophytes), this protein is Nuclear distribution protein PAC1.